We begin with the raw amino-acid sequence, 531 residues long: MTISRRDLFKAGLAAGAALSVPSLLRAQTAVAADKTVRMALENLSVFDPVATTAGISQTHALAIYDTLFSADSQSQPHPQMVGNWGVSDDKKTYTFELRDGLGWHDGTPVTAADCVASIRRWAQVGSGGQILMSRASDISKKDDRTFVISLKEPLGALPSILAFEGPFIMREKDAGLPPTEQVTANIGSGPFKFNHDLAKPGASFTYDRNEKYVPRKEPPDGMAGGKTVYVDRVVWDIGVLADPQTSVAALQTGEIDFLYRPPIDLLPLIESDPNLKLEALNRAGVDMTLRMNCLQAPFNSVKARQALLHLVDQEAVLRAAYGNPQYFKPVTSMFGNTAAVTNDENTGWFKPGGDPEKAKQLFKEAGYAGEKIVILQATDWAEQSNASQVVAAKLREIGVNAELAPSDWGGLVSRRSKRDSVDNGGWSIFITDQSEATRANVFTDISLAMNGEKAWYGWPKNDEYEALRAKWLTLETLDERKALAREMQKLWWDYVPEVPLGQNIVPSAYSKTLTGLIPATLPLMWNMQKA.

The tat-type signal signal peptide spans 1-32 (MTISRRDLFKAGLAAGAALSVPSLLRAQTAVA).

This sequence belongs to the bacterial solute-binding protein 5 family. In terms of processing, predicted to be exported by the Tat system. The position of the signal peptide cleavage has not been experimentally proven.

Its subcellular location is the periplasm. In terms of biological role, probably part of the binding-protein-dependent transport system y4tOPQRS for a peptide. This Sinorhizobium fredii (strain NBRC 101917 / NGR234) protein is Probable peptide ABC transporter periplasmic-binding protein y4tO.